A 271-amino-acid polypeptide reads, in one-letter code: 3-methyl-2-oxobutanoate hydroxymethyltransferase (271 aa).

Mg(2+)-binding residues include D50 and D89. Residues 50-51, D89, and K118 each bind 3-methyl-2-oxobutanoate; that span reads DS. E120 is a binding site for Mg(2+). The active-site Proton acceptor is the E187.

It belongs to the PanB family. In terms of assembly, homodecamer; pentamer of dimers. Mg(2+) serves as cofactor.

It localises to the cytoplasm. The enzyme catalyses 3-methyl-2-oxobutanoate + (6R)-5,10-methylene-5,6,7,8-tetrahydrofolate + H2O = 2-dehydropantoate + (6S)-5,6,7,8-tetrahydrofolate. It functions in the pathway cofactor biosynthesis; (R)-pantothenate biosynthesis; (R)-pantoate from 3-methyl-2-oxobutanoate: step 1/2. Catalyzes the reversible reaction in which hydroxymethyl group from 5,10-methylenetetrahydrofolate is transferred onto alpha-ketoisovalerate to form ketopantoate. The polypeptide is 3-methyl-2-oxobutanoate hydroxymethyltransferase (Campylobacter concisus (strain 13826)).